A 199-amino-acid chain; its full sequence is Nucleoid occlusion factor SlmA (199 aa).

The HTH tetR-type domain maps to 11–71 (ERRQQVLTVL…ALIDNLEAHL (61 aa)). The H-T-H motif DNA-binding region spans 34-53 (TTARIAAEVGVSEAALYRYY).

It belongs to the nucleoid occlusion factor SlmA family. Homodimer. Interacts with FtsZ.

Its subcellular location is the cytoplasm. The protein resides in the nucleoid. Functionally, required for nucleoid occlusion (NO) phenomenon, which prevents Z-ring formation and cell division over the nucleoid. Acts as a DNA-associated cell division inhibitor that binds simultaneously chromosomal DNA and FtsZ, and disrupts the assembly of FtsZ polymers. SlmA-DNA-binding sequences (SBS) are dispersed on non-Ter regions of the chromosome, preventing FtsZ polymerization at these regions. This is Nucleoid occlusion factor SlmA from Pasteurella multocida (strain Pm70).